Consider the following 473-residue polypeptide: Cyprosin (473 aa).

The propeptide at 1–33 (LKKRKVNILNHPGEHAGSNDANARRKYGVRGNF) is activation peptide. Residues 51–470 (YFGEIGIGTP…DYGNLRVGFA (420 aa)) enclose the Peptidase A1 domain. D69 is a catalytic residue. 2 disulfides stabilise this stretch: C82–C88 and C247–C251. Residue D256 is part of the active site. The Saposin B-type domain maps to 281–384 (VMSQQCKSLV…DKLCERLPSP (104 aa)). Disulfide bonds link C286–C378, C311–C350, C317–C347, and C392–C429. Residue N364 is glycosylated (N-linked (GlcNAc...) asparagine).

The protein belongs to the peptidase A1 family. In terms of tissue distribution, mostly present in the violet parts of styles and corollas of mature flowers.

In Cynara cardunculus (Cardoon), this protein is Cyprosin (CYPRO1).